The chain runs to 592 residues: Aspartate--tRNA(Asp/Asn) ligase (592 aa).

Glutamate 176 serves as a coordination point for L-aspartate. Positions 200 to 203 are aspartate; that stretch reads QIFK. L-aspartate is bound at residue arginine 222. Residues 222–224 and glutamine 231 each bind ATP; that span reads RDE. Histidine 450 lines the L-aspartate pocket. Glutamate 484 provides a ligand contact to ATP. Residue arginine 491 coordinates L-aspartate. An ATP-binding site is contributed by 536-539; the sequence is GLDR.

Belongs to the class-II aminoacyl-tRNA synthetase family. Type 1 subfamily. As to quaternary structure, homodimer.

The protein localises to the cytoplasm. It carries out the reaction tRNA(Asx) + L-aspartate + ATP = L-aspartyl-tRNA(Asx) + AMP + diphosphate. Functionally, aspartyl-tRNA synthetase with relaxed tRNA specificity since it is able to aspartylate not only its cognate tRNA(Asp) but also tRNA(Asn). Reaction proceeds in two steps: L-aspartate is first activated by ATP to form Asp-AMP and then transferred to the acceptor end of tRNA(Asp/Asn). The chain is Aspartate--tRNA(Asp/Asn) ligase from Anoxybacillus flavithermus (strain DSM 21510 / WK1).